We begin with the raw amino-acid sequence, 1162 residues long: Enhanced level of genomic instability 1 (1162 aa).

7 disordered regions span residues 1-136 (MTDV…ADNQ), 144-163 (KAGKPENVGVSPVSTAKPKP), 179-202 (LGVNEGGAESPADQEIGSEAATPT), 249-319 (KTDA…TKKR), 348-380 (METPKRRTLRRKSQQETPIVAESTPSSRPRRSC), 611-634 (RSMEQNMAQNEEEAKPPPSAPNGE), and 666-697 (WSGNGGSNRNSQGMDDTFDMSNDSASMGSSSN). Over residues 65 to 78 (KQKHREKHKRKREE) the composition is skewed to basic residues. Residues 79-111 (KRRAALMEDQKSTTEEVKANAKEKPQPLREKSS) are compositionally biased toward basic and acidic residues. Residues 125–136 (PLKSSTPVADNQ) are compositionally biased toward polar residues. The span at 268–278 (KRLRGRPRSRR) shows a compositional bias: basic residues. Composition is skewed to low complexity over residues 666–676 (WSGNGGSNRNS) and 684–697 (DMSNDSASMGSSSN). ATP is bound at residue 703–710 (GPSSSGKT). 2 disordered regions span residues 900-923 (GDSTRDRTGGGIKSPTKTSNSRLA) and 975-1008 (QAAGGGSRTAAKRKSRSPKKAWLSSATGQKSDGH). A compositionally biased stretch (basic residues) spans 984-993 (AAKRKSRSPK). Over residues 998–1008 (SSATGQKSDGH) the composition is skewed to polar residues.

Belongs to the ELG1 family. Component of a heteropentameric Elg1 RFC-like complex composed of one large subunit (elg1) and four small subunits (RfC4, RfC38, CG8142 and RfC3). As part of the complex, might interact with the Enok complex, composed of enok, Br140, Eaf6 and Ing5. Within the Enok complex, interacts directly with Br140. As to expression, expressed at higher levels in the germline nurse cells than in the somatic follicle cells.

The protein localises to the nucleus. In terms of biological role, has an important role in DNA replication and in maintaining genome integrity during replication stress. Promotes PCNA deubiquitination. As component of the Elg1 RFC-like complex, regulates the functions of the DNA polymerase processivity factor PCNA by unloading it from DNA after replication during the S phase of the cell cycle. The PCNA-unloading might be regulated via interaction with the Enok acetyltransferase complex. Might have a role in restarting of stalled/regressed replication forks during replication stress. In the ovaries, has a role in nurse cell endoreplication. This is Enhanced level of genomic instability 1 from Drosophila melanogaster (Fruit fly).